The sequence spans 220 residues: Small ribosomal subunit protein mS23 (220 aa).

The protein belongs to the mitochondrion-specific ribosomal protein mS23 family. As to quaternary structure, component of the mitochondrial small ribosomal subunit (mt-SSU). Mature yeast 74S mitochondrial ribosomes consist of a small (37S) and a large (54S) subunit. The 37S small subunit contains a 15S ribosomal RNA (15S mt-rRNA) and at least 32 different proteins. The 54S large subunit contains a 21S rRNA (21S mt-rRNA) and at least 45 different proteins.

The protein localises to the mitochondrion. Its function is as follows. Component of the mitochondrial ribosome (mitoribosome), a dedicated translation machinery responsible for the synthesis of mitochondrial genome-encoded proteins, including at least some of the essential transmembrane subunits of the mitochondrial respiratory chain. The mitoribosomes are attached to the mitochondrial inner membrane and translation products are cotranslationally integrated into the membrane. This is Small ribosomal subunit protein mS23 (rsm25) from Schizosaccharomyces pombe (strain 972 / ATCC 24843) (Fission yeast).